Consider the following 168-residue polypeptide: ATP synthase subunit b, chloroplastic (168 aa).

A helical membrane pass occupies residues 20–37 (LNLAVVLPIVFTLGRDTL).

This sequence belongs to the ATPase B chain family. F-type ATPases have 2 components, F(1) - the catalytic core - and F(0) - the membrane proton channel. F(1) has five subunits: alpha(3), beta(3), gamma(1), delta(1), epsilon(1). F(0) has four main subunits: a(1), b(1), b'(1) and c(10-14). The alpha and beta chains form an alternating ring which encloses part of the gamma chain. F(1) is attached to F(0) by a central stalk formed by the gamma and epsilon chains, while a peripheral stalk is formed by the delta, b and b' chains.

The protein resides in the plastid. Its subcellular location is the chloroplast thylakoid membrane. F(1)F(0) ATP synthase produces ATP from ADP in the presence of a proton or sodium gradient. F-type ATPases consist of two structural domains, F(1) containing the extramembraneous catalytic core and F(0) containing the membrane proton channel, linked together by a central stalk and a peripheral stalk. During catalysis, ATP synthesis in the catalytic domain of F(1) is coupled via a rotary mechanism of the central stalk subunits to proton translocation. In terms of biological role, component of the F(0) channel, it forms part of the peripheral stalk, linking F(1) to F(0). This Ostreococcus tauri protein is ATP synthase subunit b, chloroplastic.